We begin with the raw amino-acid sequence, 588 residues long: Adenine deaminase (588 aa).

Belongs to the metallo-dependent hydrolases superfamily. Adenine deaminase family. In terms of assembly, homodimer. Mn(2+) is required as a cofactor.

It catalyses the reaction adenine + H2O + H(+) = hypoxanthine + NH4(+). This Escherichia coli (strain K12 / DH10B) protein is Adenine deaminase.